The sequence spans 532 residues: MGSILSRRIAGVEDIDIQANSAYRYPPKSGNYFASHFFMGGEKFDTPHPEGYLFGENMDLNFLGSRPVQFPYVTPAPHEPVKTLRSLVNIRKDSLRLVRYKEDADSPTEDGEKPRVLYSLEFTFDADARVAITIYCQAVEELVNGVAVYSCKNPSLQSETVHYKRGVSQQFSLPSFKIDFSEWKDDELNFDLDRGVFPVVIQAVVDEGDVVEVTGHAHVLLAAFEKHVDGSFSVKPLKQKQIVDRVSYLLQEIYGIENKNNQETKPSDDENSDNSSECVVCLSDLRDTLILPCRHLCLCTSCADTLRYQANNCPICRLPFRALLQIRAVRKKPGALSPISFSPVLAQSVDHDEHSSSDSIPPGYEPISLLEALNGLRAVSPAIPSAPLYEEITYSGISDGLSQASCPLAGLDRIMESGLQKGKTQSKSPDSTLRSPSFPIHEEDEEKLSEDSDAPLPPSGVELVLRESSSPESFGTEEGDEPSLKQGSRVPSIDDVLQDGSPQHHGCSQPVPPADIYLPALGPESCSVGIEE.

Gly2 carries the N-myristoyl glycine lipid modification. The RING-type zinc finger occupies Glu277–Cys316. Residues Pro384–Pro387 carry the Required for TSG101-binding motif. Position 389 is a phosphotyrosine (Tyr389). Residues Leu419–Leu518 form a disordered region. A compositionally biased stretch (polar residues) spans Gly422–Ser435. 4 positions are modified to phosphoserine: Ser428, Ser449, Ser452, and Ser501. Acidic residues predominate over residues Glu442–Asp453.

In terms of assembly, interacts with MC1R and MC4R. Interacts with TSG101. Interacts with mislocalized cytosolically exposed PRNP; this interaction alters MGRN1 subcellular location and causes lysosomal enlargement. Post-translationally, autoubiquitinated in vitro. As to expression, widely expressed, with highest levels in brain, heart, kidney and liver. In the CNS, especially prominent in the Purkinje cells of the cerebellum. In the skin, expressed in the basal layer of the epidermis and hair follicles, primarily in the outer root sheath. Isoforms 1, 3, 4 and 5 are equally expressed in the liver. Isoforms 1, 3 and 4 are most abundant in brain, kidney and heart, respectively.

The protein resides in the early endosome. It is found in the cytoplasm. It localises to the cell membrane. The protein localises to the nucleus. The enzyme catalyses S-ubiquitinyl-[E2 ubiquitin-conjugating enzyme]-L-cysteine + [acceptor protein]-L-lysine = [E2 ubiquitin-conjugating enzyme]-L-cysteine + N(6)-ubiquitinyl-[acceptor protein]-L-lysine.. The protein operates within protein modification; protein ubiquitination. E3 ubiquitin-protein ligase. Mediates TSG101 monoubiquitination at multiple sites. Plays a role in the regulation of endosome-to-lysosome trafficking. Impairs MC1R- and MC4R-signaling by competing with GNAS-binding to MCRs and inhibiting agonist-induced cAMP production. Does not inhibit ADRB2-signaling. Does not promote MC1R ubiquitination. Also acts as a negative regulator of hedgehog signaling. The sequence is that of E3 ubiquitin-protein ligase MGRN1 (Mgrn1) from Mus musculus (Mouse).